The sequence spans 309 residues: Olfactory receptor 4B1 (309 aa).

Over 1 to 23 (MASTSNVTELIFTGLFQDPAVQS) the chain is Extracellular. Asn-6 carries N-linked (GlcNAc...) asparagine glycosylation. Residues 24–47 (VCFVVFLPVYLATVVGNGLIVLTV) traverse the membrane as a helical segment. The Cytoplasmic segment spans residues 48-55 (SISKSLDS). A helical membrane pass occupies residues 56-77 (PMYFFLSCLSLVEISYSSTIAP). Topologically, residues 78 to 98 (KFIIDLLAKIKTISLEGCLTQ) are extracellular. Cys-95 and Cys-187 form a disulfide bridge. Residues 99–118 (IFFFHFFGVAEILLIVVMAY) traverse the membrane as a helical segment. The Cytoplasmic segment spans residues 119–137 (DCYVAICKPLHYMNIISRQ). Residues 138-156 (LCHLLVAGSWLGGFCHSII) form a helical membrane-spanning segment. The Extracellular segment spans residues 157 to 193 (QILVIIQLPFCGPNVIDHYFCDLQPLFKLACTDTFME). The chain crosses the membrane as a helical span at residues 194 to 217 (GVIVLANSGLFSVFSFLILVSSYI). Residues 218–233 (VILVNLRNHSAEGRHK) are Cytoplasmic-facing. A helical transmembrane segment spans residues 234 to 256 (ALSTCASHITVVILFFGPAIFLY). The Extracellular portion of the chain corresponds to 257-267 (MRPSSTFTEDK). The helical transmembrane segment at 268–287 (LVAVFYTVITPMLNPIIYTL) threads the bilayer. Topologically, residues 288-309 (RNAEVKIAIRRLWSKKENPGRE) are cytoplasmic.

This sequence belongs to the G-protein coupled receptor 1 family.

It localises to the cell membrane. Its function is as follows. Odorant receptor. In Homo sapiens (Human), this protein is Olfactory receptor 4B1 (OR4B1).